A 330-amino-acid polypeptide reads, in one-letter code: GTPase Obg (330 aa).

The region spanning 1-159 is the Obg domain; sequence MHFIDEVKIY…MWIHLSLKLL (159 aa). Residues 160–327 form the OBG-type G domain; sequence SDVGLVGLPN…IVKLALETIK (168 aa). Residues 166–173, 191–195, 212–215, 279–282, and 308–310 each bind GTP; these read GLPNAGKS, FTTLV, DIPG, NKCD, and STC. Residues S173 and T193 each contribute to the Mg(2+) site.

It belongs to the TRAFAC class OBG-HflX-like GTPase superfamily. OBG GTPase family. Monomer. The cofactor is Mg(2+).

The protein localises to the cytoplasm. In terms of biological role, an essential GTPase which binds GTP, GDP and possibly (p)ppGpp with moderate affinity, with high nucleotide exchange rates and a fairly low GTP hydrolysis rate. Plays a role in control of the cell cycle, stress response, ribosome biogenesis and in those bacteria that undergo differentiation, in morphogenesis control. The chain is GTPase Obg from Rickettsia conorii (strain ATCC VR-613 / Malish 7).